A 377-amino-acid chain; its full sequence is MVSRRISEIPISKTMELDAKAKALIKKGEDVINLTAGEPDFPTPEPVVEEAVRFLQKGEVKYTDPRGIYELREGIAKRIGERYKKDISPDQVVVTNGAKQALFNAFMALLDPGDEVIVFSPVWVSYIPQIILAGGTVNVVETFMSKNFQPSLEEVEGLLVGKTKAVLINSPNNPTGVVYRREFLEGLVRLAKKRNFYIISDEVYDSLVYTDEFTSILDVSEGFDRIVYINGFSKSHSMTGWRVGYLISSEKVATAVSKIQSHTTSCINTVAQYAALKALEVDNSYMVQTFKERKNFVVERLKKMGVKFVEPEGAFYLFFKVRGDDVKFCERLLEEKKVALVPGSAFLKPGFVRLSFATSIERLTEALDRIEDFLNSR.

L-aspartate-binding residues include Gly-37, Trp-123, and Asn-173. N6-(pyridoxal phosphate)lysine is present on Lys-234. Position 353 (Arg-353) interacts with L-aspartate.

Belongs to the class-I pyridoxal-phosphate-dependent aminotransferase family. Homodimer. Requires pyridoxal 5'-phosphate as cofactor.

The protein resides in the cytoplasm. It catalyses the reaction L-aspartate + 2-oxoglutarate = oxaloacetate + L-glutamate. The sequence is that of Aspartate aminotransferase (aspC) from Thermotoga maritima (strain ATCC 43589 / DSM 3109 / JCM 10099 / NBRC 100826 / MSB8).